A 521-amino-acid polypeptide reads, in one-letter code: Glucose-1-phosphate adenylyltransferase large subunit 3, chloroplastic (521 aa).

The N-terminal 61 residues, 1 to 61, are a transit peptide targeting the chloroplast; that stretch reads MDSCCNFSLG…RKLRPGVAYA (61 aa).

This sequence belongs to the bacterial/plant glucose-1-phosphate adenylyltransferase family. As to quaternary structure, heterotetramer. Probably are expressed in roots, flowers and/or seeds.

The protein localises to the plastid. It localises to the chloroplast. The catalysed reaction is alpha-D-glucose 1-phosphate + ATP + H(+) = ADP-alpha-D-glucose + diphosphate. Its pathway is glycan biosynthesis; starch biosynthesis. Its activity is regulated as follows. Activated by 3'phosphoglycerate, inhibited by orthophosphate. Allosteric regulation. This protein plays a role in synthesis of starch. It catalyzes the synthesis of the activated glycosyl donor, ADP-glucose from Glc-1-P and ATP. This Arabidopsis thaliana (Mouse-ear cress) protein is Glucose-1-phosphate adenylyltransferase large subunit 3, chloroplastic (APL3).